Here is a 329-residue protein sequence, read N- to C-terminus: 4-hydroxythreonine-4-phosphate dehydrogenase (329 aa).

The substrate site is built by histidine 136 and threonine 137. A divalent metal cation contacts are provided by histidine 166, histidine 211, and histidine 266. Lysine 274, asparagine 283, and arginine 292 together coordinate substrate.

It belongs to the PdxA family. As to quaternary structure, homodimer. Zn(2+) is required as a cofactor. Mg(2+) serves as cofactor. Requires Co(2+) as cofactor.

The protein localises to the cytoplasm. It carries out the reaction 4-(phosphooxy)-L-threonine + NAD(+) = 3-amino-2-oxopropyl phosphate + CO2 + NADH. Its pathway is cofactor biosynthesis; pyridoxine 5'-phosphate biosynthesis; pyridoxine 5'-phosphate from D-erythrose 4-phosphate: step 4/5. Functionally, catalyzes the NAD(P)-dependent oxidation of 4-(phosphooxy)-L-threonine (HTP) into 2-amino-3-oxo-4-(phosphooxy)butyric acid which spontaneously decarboxylates to form 3-amino-2-oxopropyl phosphate (AHAP). This chain is 4-hydroxythreonine-4-phosphate dehydrogenase, found in Shigella boydii serotype 18 (strain CDC 3083-94 / BS512).